A 121-amino-acid polypeptide reads, in one-letter code: Ribonuclease P protein component (121 aa).

The protein belongs to the RnpA family. Consists of a catalytic RNA component (M1 or rnpB) and a protein subunit.

It catalyses the reaction Endonucleolytic cleavage of RNA, removing 5'-extranucleotides from tRNA precursor.. RNaseP catalyzes the removal of the 5'-leader sequence from pre-tRNA to produce the mature 5'-terminus. It can also cleave other RNA substrates such as 4.5S RNA. The protein component plays an auxiliary but essential role in vivo by binding to the 5'-leader sequence and broadening the substrate specificity of the ribozyme. The protein is Ribonuclease P protein component of Geobacillus kaustophilus (strain HTA426).